Consider the following 273-residue polypeptide: Formamidopyrimidine-DNA glycosylase (273 aa).

Pro2 acts as the Schiff-base intermediate with DNA in catalysis. Glu3 serves as the catalytic Proton donor. The active-site Proton donor; for beta-elimination activity is Lys58. His91, Arg109, and Arg154 together coordinate DNA. The segment at Phe239–Lys273 adopts an FPG-type zinc-finger fold. The Proton donor; for delta-elimination activity role is filled by Arg263.

This sequence belongs to the FPG family. In terms of assembly, monomer. Zn(2+) is required as a cofactor.

The catalysed reaction is Hydrolysis of DNA containing ring-opened 7-methylguanine residues, releasing 2,6-diamino-4-hydroxy-5-(N-methyl)formamidopyrimidine.. The enzyme catalyses 2'-deoxyribonucleotide-(2'-deoxyribose 5'-phosphate)-2'-deoxyribonucleotide-DNA = a 3'-end 2'-deoxyribonucleotide-(2,3-dehydro-2,3-deoxyribose 5'-phosphate)-DNA + a 5'-end 5'-phospho-2'-deoxyribonucleoside-DNA + H(+). Functionally, involved in base excision repair of DNA damaged by oxidation or by mutagenic agents. Acts as a DNA glycosylase that recognizes and removes damaged bases. Has a preference for oxidized purines, such as 7,8-dihydro-8-oxoguanine (8-oxoG). Has AP (apurinic/apyrimidinic) lyase activity and introduces nicks in the DNA strand. Cleaves the DNA backbone by beta-delta elimination to generate a single-strand break at the site of the removed base with both 3'- and 5'-phosphates. The sequence is that of Formamidopyrimidine-DNA glycosylase from Janthinobacterium sp. (strain Marseille) (Minibacterium massiliensis).